Reading from the N-terminus, the 332-residue chain is Super small secreted glycoprotein (332 aa).

A signal peptide spans 1 to 33; the sequence is MGSGYQLLQLPRERFRKTSFLVWVIILFQRAIS. N-linked (GlcNAc...) asparagine; by host glycosylation occurs at N41. 2 disulfides stabilise this stretch: C109/C136 and C122/C148. N205, N239, N258, and N269 each carry an N-linked (GlcNAc...) asparagine; by host glycan.

Belongs to the filoviruses glycoprotein family.

It is found in the secreted. This Homo sapiens (Human) protein is Super small secreted glycoprotein (GP).